The following is a 314-amino-acid chain: Olfactory receptor 14A2 (314 aa).

Over 1–26 the chain is Extracellular; it reads MANVTLVTGFLLMGFSNIQKLRILYG. Residue Asn3 is glycosylated (N-linked (GlcNAc...) asparagine). Residues 27-47 form a helical membrane-spanning segment; sequence VLFLLIYLAALMSNLLIITLI. At 48–55 the chain is on the cytoplasmic side; the sequence is TLDVKLQT. A helical membrane pass occupies residues 56–76; the sequence is PMYFFLKNLSFLDVFLVSVPI. Over 77-91 the chain is Extracellular; that stretch reads PKFIVNNLTHNNSIS. Asn83 carries an N-linked (GlcNAc...) asparagine glycan. A helical membrane pass occupies residues 92–112; it reads ILGCAFQLLLMTSFSAGEIFI. Cys95 and Cys177 are oxidised to a cystine. At 113-136 the chain is on the cytoplasmic side; sequence LTAMSYDRYVAICCPLNYEVIMNT. A helical membrane pass occupies residues 137–157; it reads GVCVLMASVSWAIGGLFGTAY. Over 158–193 the chain is Extracellular; it reads TAGTFSMPFCGSSVIPQFFCDVPSLLRISCSETLMV. Residues 194-214 form a helical membrane-spanning segment; it reads IYAGIGVGACLSISCFICIVI. Residues 215–237 are Cytoplasmic-facing; it reads SYIYIFSTVLKIPTTKGQSKAFS. A helical transmembrane segment spans residues 238–258; that stretch reads TCFPHLTVFTVFIITAYFVYL. The Extracellular segment spans residues 259–267; that stretch reads KPPSNSPSV. Residues 268–290 form a helical membrane-spanning segment; the sequence is IDRLLSVIYTVMPPVFNPVTYSL. Over 291 to 314 the chain is Cytoplasmic; the sequence is RNNDMKCALIRLLQKTYGQEAYFI.

Belongs to the G-protein coupled receptor 1 family.

The protein resides in the cell membrane. In terms of biological role, odorant receptor. This Homo sapiens (Human) protein is Olfactory receptor 14A2 (OR14A2).